The chain runs to 166 residues: NADH-ubiquinone oxidoreductase chain 6 (166 aa).

Transmembrane regions (helical) follow at residues 1–21 (MMYF…AFAS), 26–46 (IYGG…VVSL), 47–67 (GGSF…LVVF), 87–107 (VFTN…YFSG), and 139–159 (CGGW…FVVL).

This sequence belongs to the complex I subunit 6 family. In terms of assembly, core subunit of respiratory chain NADH dehydrogenase (Complex I) which is composed of 45 different subunits.

It localises to the mitochondrion inner membrane. It catalyses the reaction a ubiquinone + NADH + 5 H(+)(in) = a ubiquinol + NAD(+) + 4 H(+)(out). Core subunit of the mitochondrial membrane respiratory chain NADH dehydrogenase (Complex I) which catalyzes electron transfer from NADH through the respiratory chain, using ubiquinone as an electron acceptor. Essential for the catalytic activity and assembly of complex I. The chain is NADH-ubiquinone oxidoreductase chain 6 (MT-ND6) from Ornithorhynchus anatinus (Duckbill platypus).